The chain runs to 428 residues: uncharacterized protein (428 aa).

Residues 72-91 (SQGSPVAPSPNHRSTMYSSS) are disordered. The residue at position 127 (serine 127) is a Phosphoserine.

This is an uncharacterized protein from Saccharomyces cerevisiae (strain ATCC 204508 / S288c) (Baker's yeast).